An 82-amino-acid chain; its full sequence is ATP synthase subunit c, chloroplastic (82 aa).

The next 2 membrane-spanning stretches (helical) occupy residues 4 to 24 and 57 to 77; these read IISA…AIGP and LAFM…LLFA.

Belongs to the ATPase C chain family. In terms of assembly, F-type ATPases have 2 components, F(1) - the catalytic core - and F(0) - the membrane proton channel. F(1) has five subunits: alpha(3), beta(3), gamma(1), delta(1), epsilon(1). F(0) has four main subunits: a(1), b(1), b'(1) and c(10-14). The alpha and beta chains form an alternating ring which encloses part of the gamma chain. F(1) is attached to F(0) by a central stalk formed by the gamma and epsilon chains, while a peripheral stalk is formed by the delta, b and b' chains.

The protein resides in the plastid. It is found in the chloroplast thylakoid membrane. In terms of biological role, f(1)F(0) ATP synthase produces ATP from ADP in the presence of a proton or sodium gradient. F-type ATPases consist of two structural domains, F(1) containing the extramembraneous catalytic core and F(0) containing the membrane proton channel, linked together by a central stalk and a peripheral stalk. During catalysis, ATP synthesis in the catalytic domain of F(1) is coupled via a rotary mechanism of the central stalk subunits to proton translocation. Its function is as follows. Key component of the F(0) channel; it plays a direct role in translocation across the membrane. A homomeric c-ring of between 10-14 subunits forms the central stalk rotor element with the F(1) delta and epsilon subunits. The chain is ATP synthase subunit c, chloroplastic from Heterosigma akashiwo (strain NIES-293 / 8280G21-1).